The chain runs to 694 residues: Glycine--tRNA ligase beta subunit (694 aa).

Belongs to the class-II aminoacyl-tRNA synthetase family. Tetramer of two alpha and two beta subunits.

The protein localises to the cytoplasm. The catalysed reaction is tRNA(Gly) + glycine + ATP = glycyl-tRNA(Gly) + AMP + diphosphate. The chain is Glycine--tRNA ligase beta subunit from Acidithiobacillus ferrooxidans (strain ATCC 23270 / DSM 14882 / CIP 104768 / NCIMB 8455) (Ferrobacillus ferrooxidans (strain ATCC 23270)).